We begin with the raw amino-acid sequence, 218 residues long: Monomethylamine corrinoid protein 1 (218 aa).

In terms of domain architecture, B12-binding N-terminal spans 1-91; that stretch reads MANQEIFDKL…ELEKTKVEGE (91 aa). The B12-binding domain occupies 94–218; the sequence is TGLAITFVAE…AAKVALNIMK (125 aa). A methylcob(III)alamin-binding site is contributed by H107.

Belongs to the methylamine corrinoid protein family. In terms of assembly, can form a complex with MtmB.

Its pathway is one-carbon metabolism; methanogenesis from methylamine. Acts as a methyl group carrier between MtmB and MtbA. The chain is Monomethylamine corrinoid protein 1 (mtmC1) from Methanosarcina mazei (strain ATCC BAA-159 / DSM 3647 / Goe1 / Go1 / JCM 11833 / OCM 88) (Methanosarcina frisia).